The primary structure comprises 226 residues: MIILKQMYVHDGRKFEALTIRNYTETDIERLISLQEECFPPPFPQELLWSEDQLASHIKTFPEGALCALINGRIIGSMTALIVQFEPDSPDHTWAQATDNGSIKNHEPHGNTLYVVDISVSPHYRKLGIGKWLMNTMYELTVDKRLERLLGGGRIPLYYKYAHEISAVQYVEDVMEGRKNDPVLSFLLRCGRSPIRVVSNYLEDKESLNYGVLMEWKNVFYKKASC.

Positions 18–219 constitute an N-acetyltransferase domain; it reads LTIRNYTETD…YGVLMEWKNV (202 aa).

This sequence belongs to the acetyltransferase family.

This is an uncharacterized protein from Bacillus subtilis (strain 168).